A 247-amino-acid polypeptide reads, in one-letter code: Fibroblast growth factor 14 (247 aa).

Disordered stretches follow at residues 1 to 37 (MAAA…SKNR) and 216 to 247 (ETVP…CKTT). Positions 15–25 (QAREQHWDRPS) are enriched in basic and acidic residues.

It belongs to the heparin-binding growth factors family. As to quaternary structure, interacts with SCN8A. As to expression, brain and testis; widely distributed in the developing nervous system. In adult, high levels in the granular layer of the cerebellum, less in hippocampus and olfactory bulb.

It localises to the nucleus. In terms of biological role, probably involved in nervous system development and function. The polypeptide is Fibroblast growth factor 14 (Fgf14) (Mus musculus (Mouse)).